The following is a 702-amino-acid chain: Ribosomal RNA large subunit methyltransferase K/L (702 aa).

Residues 43–154 (LIYQSLMWSR…KETASIALDL (112 aa)) enclose the THUMP domain.

It belongs to the methyltransferase superfamily. RlmKL family.

Its subcellular location is the cytoplasm. The catalysed reaction is guanosine(2445) in 23S rRNA + S-adenosyl-L-methionine = N(2)-methylguanosine(2445) in 23S rRNA + S-adenosyl-L-homocysteine + H(+). It carries out the reaction guanosine(2069) in 23S rRNA + S-adenosyl-L-methionine = N(2)-methylguanosine(2069) in 23S rRNA + S-adenosyl-L-homocysteine + H(+). In terms of biological role, specifically methylates the guanine in position 2445 (m2G2445) and the guanine in position 2069 (m7G2069) of 23S rRNA. In Salmonella typhi, this protein is Ribosomal RNA large subunit methyltransferase K/L.